Consider the following 275-residue polypeptide: Tryptophan synthase alpha chain (275 aa).

Active-site proton acceptor residues include Glu60 and Asp71.

Belongs to the TrpA family. Tetramer of two alpha and two beta chains.

The catalysed reaction is (1S,2R)-1-C-(indol-3-yl)glycerol 3-phosphate + L-serine = D-glyceraldehyde 3-phosphate + L-tryptophan + H2O. The protein operates within amino-acid biosynthesis; L-tryptophan biosynthesis; L-tryptophan from chorismate: step 5/5. The alpha subunit is responsible for the aldol cleavage of indoleglycerol phosphate to indole and glyceraldehyde 3-phosphate. This chain is Tryptophan synthase alpha chain, found in Prochlorococcus marinus (strain MIT 9313).